The sequence spans 322 residues: Putative HTH-type transcriptional regulatory protein rrnAC2519 (322 aa).

An HTH cro/C1-type domain is found at 132–189; it reads LADVREDRDWSLGRLAKELGVSRRTVSKYEDGMDASVEVAAELEDLFDAPLTSPVSVL. Positions 143 to 162 form a DNA-binding region, H-T-H motif; that stretch reads LGRLAKELGVSRRTVSKYED.

This is Putative HTH-type transcriptional regulatory protein rrnAC2519 from Haloarcula marismortui (strain ATCC 43049 / DSM 3752 / JCM 8966 / VKM B-1809) (Halobacterium marismortui).